Consider the following 88-residue polypeptide: Small ribosomal subunit protein bS16c (88 aa).

Belongs to the bacterial ribosomal protein bS16 family.

It is found in the plastid. Its subcellular location is the chloroplast. The protein is Small ribosomal subunit protein bS16c of Sinapis alba (White mustard).